The chain runs to 434 residues: UDP-N-acetylglucosamine 1-carboxyvinyltransferase (434 aa).

Residue 34-35 (KN) coordinates phosphoenolpyruvate. Arg104 serves as a coordination point for UDP-N-acetyl-alpha-D-glucosamine. Cys128 acts as the Proton donor in catalysis. Cys128 carries the post-translational modification 2-(S-cysteinyl)pyruvic acid O-phosphothioketal. Positions 319 and 341 each coordinate UDP-N-acetyl-alpha-D-glucosamine.

This sequence belongs to the EPSP synthase family. MurA subfamily.

The protein resides in the cytoplasm. The enzyme catalyses phosphoenolpyruvate + UDP-N-acetyl-alpha-D-glucosamine = UDP-N-acetyl-3-O-(1-carboxyvinyl)-alpha-D-glucosamine + phosphate. It functions in the pathway cell wall biogenesis; peptidoglycan biosynthesis. Functionally, cell wall formation. Adds enolpyruvyl to UDP-N-acetylglucosamine. In Prochlorococcus marinus (strain MIT 9313), this protein is UDP-N-acetylglucosamine 1-carboxyvinyltransferase.